The sequence spans 890 residues: Serine/threonine-protein kinase D3 (890 aa).

Phosphoserine is present on residues Ser6, Ser27, Ser37, Ser41, and Ser44. The Phorbol-ester/DAG-type 1 zinc finger occupies 154–204 (PHTLYVHSYKAPTFCDYCGEMLWGLVRQGLKCEGCGLNYHKRCAFKIPNNC). Phosphoserine occurs at positions 213 and 216. The segment at 271–321 (PHTFAVHSYTRPTICQYCKRLLKGLFRQGMQCKDCKFNCHKRCASKVPRDC) adopts a Phorbol-ester/DAG-type 2 zinc-finger fold. Residues 332 to 371 (SSLGTDTDIPMDIDNNDINSDSSRGLDDTEEPSPPEDKMF) are disordered. 3 positions are modified to phosphoserine: Ser364, Ser391, and Ser395. The PH domain maps to 416–532 (TMVKEGWMVH…WEKAIRQALM (117 aa)). Tyr426 bears the Phosphotyrosine mark. At Ser442 the chain carries Phosphoserine. At Tyr457 the chain carries Phosphotyrosine. Position 535 is a phosphothreonine (Thr535). Position 539 is a phosphoserine (Ser539). Residues 576 to 832 (IFADEVLGSG…VDKSLSHPWL (257 aa)) form the Protein kinase domain. ATP is bound by residues 582–590 (LGSGQFGIV) and Lys605. Asp699 (proton acceptor) is an active-site residue. Position 731 is a phosphoserine; by PKC (Ser731). Position 735 is a phosphoserine; by autocatalysis (Ser735). Tyr742 carries the post-translational modification Phosphotyrosine.

The protein belongs to the protein kinase superfamily. CAMK Ser/Thr protein kinase family. PKD subfamily. Mg(2+) is required as a cofactor. Ubiquitous.

The protein resides in the cytoplasm. It is found in the membrane. It catalyses the reaction L-seryl-[protein] + ATP = O-phospho-L-seryl-[protein] + ADP + H(+). It carries out the reaction L-threonyl-[protein] + ATP = O-phospho-L-threonyl-[protein] + ADP + H(+). Its activity is regulated as follows. Activated by DAG and phorbol esters. Phorbol-ester/DAG-type domains 1 and 2 bind both DAG and phorbol ester with high affinity and mediate translocation to the cell membrane. Autophosphorylation of Ser-735 and phosphorylation of Ser-731 by PKC relieves auto-inhibition by the PH domain. Functionally, converts transient diacylglycerol (DAG) signals into prolonged physiological effects, downstream of PKC. Involved in resistance to oxidative stress. The sequence is that of Serine/threonine-protein kinase D3 (PRKD3) from Homo sapiens (Human).